We begin with the raw amino-acid sequence, 45 residues long: MDDFKQAILLLVVDFVFVIILLLVLTFVVPRLQQSSTINTGLRTV.

A helical membrane pass occupies residues isoleucine 8–valine 28.

It localises to the host rough endoplasmic reticulum membrane. Its function is as follows. Transports viral genome to neighboring plant cells directly through plasmosdesmata, without any budding. The movement protein allows efficient cell to cell propagation, by bypassing the host cell wall barrier. Two movement proteins, p6, Hsp70h and three structural proteins, CP, CPm, and P64 are essential for cell-cell movement. Also plays a role in virion formation. Together with CPm and p64, encapsidates the 5'-terminal portion of the viral genome. This is Movement protein p5 from Grapevine leafroll-associated virus 3 (isolate United States/NY1) (GLRaV-3).